The chain runs to 406 residues: Arginine deiminase (406 aa).

The Amidino-cysteine intermediate role is filled by Cys-396.

Belongs to the arginine deiminase family.

Its subcellular location is the cytoplasm. It catalyses the reaction L-arginine + H2O = L-citrulline + NH4(+). The protein operates within amino-acid degradation; L-arginine degradation via ADI pathway; carbamoyl phosphate from L-arginine: step 1/2. The protein is Arginine deiminase of Salmonella typhimurium (strain LT2 / SGSC1412 / ATCC 700720).